The sequence spans 159 residues: 16 kDa outer membrane lipoprotein (159 aa).

The signal sequence occupies residues 1 to 21 (MNKKIFTLFLVVAASAIFAVS). The N-palmitoyl cysteine moiety is linked to residue Cys22. A lipid anchor (S-diacylglycerol cysteine) is attached at Cys22.

Its subcellular location is the cell outer membrane. The sequence is that of 16 kDa outer membrane lipoprotein (smpA) from Brachyspira hyodysenteriae (Treponema hyodysenteriae).